Here is a 776-residue protein sequence, read N- to C-terminus: Palmitoyltransferase AKR1 (776 aa).

Residues 1–311 (MDQEMTTVAS…MEGKLGPRNT (311 aa)) lie on the Cytoplasmic side of the membrane. The interval 38–58 (RLDEGSSIRGGELERDSQEVG) is disordered. 6 ANK repeats span residues 68 to 97 (CHDL…SLNL), 103 to 132 (QDVT…DIDA), 137 to 166 (LKAT…DPNI), 170 to 199 (QGFN…AIDE), 203 to 232 (DGHT…SVNS), and 236 to 265 (AGMT…SLDA). Residues 312 to 332 (ILAIFLLPIAVLWLIFSTFKW) form a helical membrane-spanning segment. Residues 333-336 (LPVY) are Lumenal-facing. The helical transmembrane segment at 337–357 (VGVPFAIAEFMGMQYTVVLVL) threads the bilayer. At 358–368 (LGHIKAQDKVS) the chain is on the cytoplasmic side. The chain crosses the membrane as a helical span at residues 369 to 389 (TSNYFASIITASLIWVGYCWI). The Lumenal portion of the chain corresponds to 390-402 (SRFAVNTPGYAFS). Residues 403–423 (NLGFIIMFVGCCWTFWTAIVT) form a helical membrane-spanning segment. Residues 424 to 498 (DPGFVPKGQQ…NCVGAKNHRS (75 aa)) are Cytoplasmic-facing. One can recognise a DHHC domain in the interval 454 to 504 (NFCIVCMARKPLRSKHCRTCNRCVARFDHHCPWIWNCVGAKNHRSFLLFVL). Cys-484 functions as the S-palmitoyl cysteine intermediate in the catalytic mechanism. A helical membrane pass occupies residues 499 to 519 (FLLFVLFLIGGIILFIRLTIA). Over 520–553 (YIQQNAPEYIPTPNPGLTTCDISTTLCQAGDFDP) the chain is Lumenal. Residues 554–574 (FLLCMALWSTLQLTWTSVLAI) form a helical membrane-spanning segment. Residues 575–776 (SHLWQVSRQM…RYEVVSEQEV (202 aa)) lie on the Cytoplasmic side of the membrane. The interval 628 to 665 (GAGEEAAGPPGAEAGPEGNALLPPPGGHVHGPQCRHGD) is disordered. A compositionally biased stretch (low complexity) spans 629–645 (AGEEAAGPPGAEAGPEG).

Belongs to the DHHC palmitoyltransferase family. AKR/ZDHHC17 subfamily.

The protein resides in the early endosome membrane. It localises to the golgi apparatus membrane. It catalyses the reaction L-cysteinyl-[protein] + hexadecanoyl-CoA = S-hexadecanoyl-L-cysteinyl-[protein] + CoA. Palmitoyltransferase specific for casein kinase 1. The polypeptide is Palmitoyltransferase AKR1 (AKR1) (Cryptococcus neoformans var. neoformans serotype D (strain B-3501A) (Filobasidiella neoformans)).